Here is a 179-residue protein sequence, read N- to C-terminus: Shikimate kinase (179 aa).

ATP is bound at residue 11-16 (GAGKTT). Thr15 contributes to the Mg(2+) binding site. Substrate is bound by residues Asp33, Arg57, and Gly79. Arg118 is a binding site for ATP. Substrate is bound at residue Arg140.

This sequence belongs to the shikimate kinase family. As to quaternary structure, monomer. Mg(2+) serves as cofactor.

The protein resides in the cytoplasm. The catalysed reaction is shikimate + ATP = 3-phosphoshikimate + ADP + H(+). Its pathway is metabolic intermediate biosynthesis; chorismate biosynthesis; chorismate from D-erythrose 4-phosphate and phosphoenolpyruvate: step 5/7. Its function is as follows. Catalyzes the specific phosphorylation of the 3-hydroxyl group of shikimic acid using ATP as a cosubstrate. The protein is Shikimate kinase of Bacteroides fragilis (strain ATCC 25285 / DSM 2151 / CCUG 4856 / JCM 11019 / LMG 10263 / NCTC 9343 / Onslow / VPI 2553 / EN-2).